A 533-amino-acid chain; its full sequence is KDKGPPPKSRYEEELRTRGKTTITAANFIDVIITRQIASDKDARERGSQSSDSSSSLSSHRYEAPSDAIEVISPASSPAPPQEKPQTYQPEMVKANQAENESPQQYEGPLTHYRSQQGSPSPQQQPPLPPSSQAEGMGQVPRTHRLITLADHICQIITQDFARNQVPSQPSTSTFQTSPSALSSTPVRTKPSSRYSPESQSQTVLHPRPGPRVSPENLVDKSRGSRPGKSPERSHIPSEPYEPISPPQGPAVHEKQDSMLLLSQRGMDPAEQRSDSRSPGSISYLPYFFTKLESTSPMVKSKKQEIFRKLNSSGGGDSDMAAAQPGTEIFNLPAVTTSGAVSSRSHSFADPASNLGLEDIIRKALMGSFDDKVEDHGVVMPHPVGVVPGSASTSVVTSSETRRDEGDPSPHSGVCKPKLINKSNSRKSKSPIPGQNYLGTERPSSVSSVHSEGDYHRQTPGWAWEDRPSSTGSTQFPYNPLTIRMLSSTPPTPIACAPSAITQAAPHQQSRIWEREPAPLLSAQYETLSDSDD.

A compositionally biased stretch (basic and acidic residues) spans 1 to 17; that stretch reads KDKGPPPKSRYEEELRT. Residues 1-21 form a disordered region; the sequence is KDKGPPPKSRYEEELRTRGKT. Positions 29 to 33 match the CORNR box 1 motif; that stretch reads IDVII. A disordered region spans residues 37–144; sequence IASDKDARER…EGMGQVPRTH (108 aa). The span at 38 to 47 shows a compositional bias: basic and acidic residues; it reads ASDKDARERG. Over residues 48–59 the composition is skewed to low complexity; that stretch reads SQSSDSSSSLSS. Residues S73 and S77 each carry the phosphoserine modification. The interval 130-209 is ID1; it reads PSSQAEGMGQ…QSQTVLHPRP (80 aa). Residues 145–148 are required for interaction with RARA in the absence of its ligand; sequence RLIT. The CORNR box 2 signature appears at 153–157; sequence ICQII. Over residues 165–180 the composition is skewed to low complexity; the sequence is QVPSQPSTSTFQTSPS. The segment at 165 to 254 is disordered; sequence QVPSQPSTST…SPPQGPAVHE (90 aa). Positions 181–204 are enriched in polar residues; it reads ALSSTPVRTKPSSRYSPESQSQTV. Phosphoserine is present on residues S196, S214, S230, S245, and S278. Positions 218–236 are enriched in basic and acidic residues; sequence LVDKSRGSRPGKSPERSHI. Positions 306-367 are ID2; it reads IFRKLNSSGG…EDIIRKALMG (62 aa). The CORNR box 3 signature appears at 357 to 361; it reads LEDII. The span at 382-399 shows a compositional bias: low complexity; sequence HPVGVVPGSASTSVVTSS. The disordered stretch occupies residues 382–476; that stretch reads HPVGVVPGSA…RPSSTGSTQF (95 aa). T492 is subject to Phosphothreonine. Phosphoserine occurs at positions 529 and 531.

It belongs to the N-CoR nuclear receptor corepressors family. Forms a large corepressor complex that contains SIN3A/B and histone deacetylases HDAC1 and HDAC2. This complex associates with the thyroid receptor (TR) and the retinoid acid receptor (RAR) in the absence of ligand. Interacts directly with RARA; the interaction is facilitated with RARA trimethylation. Component of the N-Cor repressor complex, at least composed of CBFA2T3, HEXIM1, NCOR1, NCOR2, HDAC3, TBL1X, TBL1XR1, CORO2A and GPS2. Interacts with ZBTB33; the interaction serves to recruit the N-CoR complex to promoter regions containing methylated CpG dinucleotides. Interacts with TRIM28 and KDM3A. Interacts (via the RD1 domain) with BAZ1A (via its N-terminal); the interaction corepresses a number of NCOR1-regulated genes. Interacts with BCL6, C1D, DACH1, HEXIM1, HDAC7, RORA, RORC, SAP30, SIAH2, SIN3A and SIN3B. May interact with DEAF1. Interacts with RXRA. Interacts with SETD5. Interacts with VDR. Interacts with ZBTB7A. Interacts with AR. Interacts with HDAC3. Ubiquitinated; mediated by SIAH2 and leading to its subsequent proteasomal degradation.

The protein resides in the nucleus. Its function is as follows. Mediates transcriptional repression by certain nuclear receptors. Part of a complex which promotes histone deacetylation and the formation of repressive chromatin structures which may impede the access of basal transcription factors. Participates in the transcriptional repressor activity produced by BCL6. Recruited by ZBTB7A to the androgen response elements/ARE on target genes, negatively regulates androgen receptor signaling and androgen-induced cell proliferation. Mediates the NR1D1-dependent repression and circadian regulation of TSHB expression. The NCOR1-HDAC3 complex regulates the circadian expression of the core clock gene ARTNL/BMAL1 and the genes involved in lipid metabolism in the liver. The protein is Nuclear receptor corepressor 1 (Ncor1) of Rattus norvegicus (Rat).